The chain runs to 56 residues: uncharacterized protein (56 aa).

This is an uncharacterized protein from Schizosaccharomyces pombe (strain 972 / ATCC 24843) (Fission yeast).